We begin with the raw amino-acid sequence, 186 residues long: Nascent polypeptide-associated complex subunit beta (186 aa).

Positions 65–130 (GADDKKLQTT…GEEKELTELV (66 aa)) constitute an NAC-A/B domain. The segment at 153 to 186 (QNMQKQAGAEGKKDEDEDDIPDLVEGENFESNVE) is disordered. The segment covering 167–186 (EDEDDIPDLVEGENFESNVE) has biased composition (acidic residues).

Belongs to the NAC-beta family. Part of the nascent polypeptide-associated complex (NAC), consisting of egd2 and egd1. NAC associates with ribosomes via egd1.

It is found in the cytoplasm. Its subcellular location is the nucleus. In terms of biological role, component of the nascent polypeptide-associated complex (NAC), a dynamic component of the ribosomal exit tunnel, protecting the emerging polypeptides from interaction with other cytoplasmic proteins to ensure appropriate nascent protein targeting. The NAC complex also promotes mitochondrial protein import by enhancing productive ribosome interactions with the outer mitochondrial membrane and blocks the inappropriate interaction of ribosomes translating non-secretory nascent polypeptides with translocation sites in the membrane of the endoplasmic reticulum. EGD1 may act as a transcription factor that exert a negative effect on the expression of several genes that are transcribed by RNA polymerase II. In Aspergillus fumigatus (strain ATCC MYA-4609 / CBS 101355 / FGSC A1100 / Af293) (Neosartorya fumigata), this protein is Nascent polypeptide-associated complex subunit beta (egd1).